Consider the following 476-residue polypeptide: Protein transport protein Sec61 subunit alpha (476 aa).

At glycine 2–leucine 33 the chain is on the cytoplasmic side. A helical transmembrane segment spans residues tryptophan 34–isoleucine 53. Residues methionine 54 to leucine 76 lie on the Lumenal side of the membrane. The helical transmembrane segment at methionine 77–glycine 96 threads the bilayer. Residues alanine 97–lysine 117 lie on the Cytoplasmic side of the membrane. A helical transmembrane segment spans residues leucine 118–glycine 138. Residues aspartate 139 to glycine 144 are Lumenal-facing. A helical membrane pass occupies residues alanine 145–leucine 165. The Cytoplasmic segment spans residues aspartate 166–glycine 172. Residues tyrosine 173–tryptophan 193 form a helical membrane-spanning segment. Residues lysine 194–proline 240 are Lumenal-facing. A helical transmembrane segment spans residues asparagine 241 to phenylalanine 261. Over arginine 262–asparagine 288 the chain is Cytoplasmic. A helical membrane pass occupies residues isoleucine 289–serine 309. At threonine 310 to valine 354 the chain is on the lumenal side. The chain crosses the membrane as a helical span at residues leucine 355–phenylalanine 375. The Cytoplasmic portion of the chain corresponds to serine 376–alanine 420. The chain crosses the membrane as a helical span at residues alanine 421 to isoleucine 441. Over glycine 442–threonine 445 the chain is Lumenal. A helical transmembrane segment spans residues glycine 446–valine 462. Topologically, residues lysine 463–phenylalanine 476 are cytoplasmic.

Belongs to the SecY/SEC61-alpha family. In terms of assembly, the SEC61 channel-forming translocon complex consists of channel-forming core components SEC61A1, SEC61B and SEC61G and different auxiliary components such as SEC62 and SEC63. The SEC61 channel associates with the multi-pass translocon (MPT) complex.

It is found in the endoplasmic reticulum membrane. In terms of biological role, component of SEC61 channel-forming translocon complex that mediates transport of signal peptide-containing precursor polypeptides across the endoplasmic reticulum (ER). Forms a ribosome receptor and a gated pore in the ER membrane, both functions required for cotranslational translocation of nascent polypeptides. May cooperate with auxiliary protein SEC62, SEC63 and HSPA5/BiP to enable post-translational transport of small presecretory proteins. The SEC61 channel is also involved in ER membrane insertion of transmembrane proteins: it mediates membrane insertion of the first few transmembrane segments of proteins, while insertion of subsequent transmembrane regions of multi-pass membrane proteins is mediated by the multi-pass translocon (MPT) complex. In Hemitripterus americanus (Sea raven), this protein is Protein transport protein Sec61 subunit alpha (sec61a).